We begin with the raw amino-acid sequence, 105 residues long: BLOC-1-related complex subunit 7 (105 aa).

Belongs to the BORCS7 family. Component of the BLOC-one-related complex (BORC) which is composed of BLOC1S1, BLOC1S2, BORCS5, BORCS6, BORCS7, BORCS8, KXD1 and SNAPIN.

It is found in the lysosome membrane. Functionally, as part of the BORC complex may play a role in lysosomes movement and localization at the cell periphery. Associated with the cytosolic face of lysosomes, the BORC complex may recruit ARL8B and couple lysosomes to microtubule plus-end-directed kinesin motor. The chain is BLOC-1-related complex subunit 7 from Mus musculus (Mouse).